The primary structure comprises 121 residues: Basic phospholipase A2 homolog blK-PLA2 (121 aa).

7 disulfides stabilise this stretch: Cys-26-Cys-115, Cys-28-Cys-44, Cys-43-Cys-95, Cys-49-Cys-121, Cys-50-Cys-88, Cys-57-Cys-81, and Cys-75-Cys-86. The important for membrane-damaging activities in eukaryotes and bacteria; heparin-binding stretch occupies residues 105-117; that stretch reads KKYRYHLKPFCKK.

It belongs to the phospholipase A2 family. Group II subfamily. K49 sub-subfamily. Homodimer; non-covalently linked. Expressed by the venom gland.

The protein resides in the secreted. Functionally, snake venom phospholipase A2 (PLA2) homolog that lacks enzymatic activity. Shows myotoxic and edema-inducing activities in vivo. A model of myotoxic mechanism has been proposed: an apo Lys49-PLA2 is activated by the entrance of a hydrophobic molecule (e.g. fatty acid) at the hydrophobic channel of the protein leading to a reorientation of a monomer. This reorientation causes a transition between 'inactive' to 'active' states, causing alignment of C-terminal and membrane-docking sites (MDoS) side-by-side and putting the membrane-disruption sites (MDiS) in the same plane, exposed to solvent and in a symmetric position for both monomers. The MDoS region stabilizes the toxin on membrane by the interaction of charged residues with phospholipid head groups. Subsequently, the MDiS region destabilizes the membrane with penetration of hydrophobic residues. This insertion causes a disorganization of the membrane, allowing an uncontrolled influx of ions (i.e. calcium and sodium), and eventually triggering irreversible intracellular alterations and cell death. The protein is Basic phospholipase A2 homolog blK-PLA2 of Bothrops leucurus (Whitetail lancehead).